The chain runs to 973 residues: Coatomer subunit beta (973 aa).

HEAT repeat units lie at residues 98–133 (HEMI…REAE) and 134–170 (LLEQ…VSEH). At S181 the chain carries Phosphoserine. HEAT repeat units lie at residues 279–317 (NVLV…NNVG) and 318–354 (ALEE…SRNA). The residue at position 540 (S540) is a Phosphoserine.

In terms of assembly, oligomeric complex that consists of at least the alpha, beta, beta', gamma, delta, epsilon and zeta subunits. The complex interacts with ARF1 and PAB1. In terms of processing, the N-terminus is blocked.

The protein resides in the cytoplasm. Its subcellular location is the golgi apparatus membrane. The protein localises to the cytoplasmic vesicle. It localises to the COPI-coated vesicle membrane. Its function is as follows. The coatomer is a cytosolic protein complex that binds to dilysine motifs and reversibly associates with Golgi non-clathrin-coated vesicles, which further mediate biosynthetic protein transport from the ER, via the Golgi up to the trans Golgi network. Coatomer complex is required for budding from Golgi membranes, and is essential for the retrograde Golgi-to-ER transport of dilysine-tagged proteins. Required for mitochondrial morphology. In Saccharomyces cerevisiae (strain ATCC 204508 / S288c) (Baker's yeast), this protein is Coatomer subunit beta (SEC26).